The primary structure comprises 401 residues: Imidazolonepropionase (401 aa).

Fe(3+)-binding residues include H66 and H68. H66 and H68 together coordinate Zn(2+). 4-imidazolone-5-propanoate is bound by residues R75, Y138, and H171. Y138 lines the N-formimidoyl-L-glutamate pocket. H236 serves as a coordination point for Fe(3+). H236 contacts Zn(2+). Q239 is a 4-imidazolone-5-propanoate binding site. D311 contributes to the Fe(3+) binding site. D311 is a Zn(2+) binding site. Residues N313 and G315 each contribute to the N-formimidoyl-L-glutamate site. T316 contributes to the 4-imidazolone-5-propanoate binding site.

Belongs to the metallo-dependent hydrolases superfamily. HutI family. Zn(2+) serves as cofactor. Fe(3+) is required as a cofactor.

Its subcellular location is the cytoplasm. It catalyses the reaction 4-imidazolone-5-propanoate + H2O = N-formimidoyl-L-glutamate. Its pathway is amino-acid degradation; L-histidine degradation into L-glutamate; N-formimidoyl-L-glutamate from L-histidine: step 3/3. In terms of biological role, catalyzes the hydrolytic cleavage of the carbon-nitrogen bond in imidazolone-5-propanoate to yield N-formimidoyl-L-glutamate. It is the third step in the universal histidine degradation pathway. The polypeptide is Imidazolonepropionase (Acinetobacter baumannii (strain AB0057)).